The chain runs to 416 residues: Counting factor 60 (416 aa).

The signal sequence occupies residues 1-22 (MIKKSALITLFLVSLILGVSLS). N-linked (GlcNAc...) asparagine glycosylation is found at Asn-110, Asn-218, Asn-231, Asn-318, and Asn-411.

The protein belongs to the histidine acid phosphatase family. As to quaternary structure, component of the counting factor (CF) complex, which includes cf60, cf50, cf45-1 and ctnA.

The protein localises to the secreted. Cell-counting factor that limits the maximum size of the multicellular structure. Does not possess acid phosphatase activity. Cells with decreased levels of this protein form large groups while cells overexpressing this protein form small groups. This Dictyostelium discoideum (Social amoeba) protein is Counting factor 60 (cf60).